The sequence spans 290 residues: Acetyl-coenzyme A carboxylase carboxyl transferase subunit beta (290 aa).

One can recognise a CoA carboxyltransferase N-terminal domain in the interval 28 to 290; it reads IMTKCPKCKK…TGGDIEWLQD (263 aa). Positions 32, 35, 51, and 54 each coordinate Zn(2+). A C4-type zinc finger spans residues 32-54; that stretch reads CPKCKKIMLTKELDKNMRVCMNC.

This sequence belongs to the AccD/PCCB family. As to quaternary structure, acetyl-CoA carboxylase is a heterohexamer composed of biotin carboxyl carrier protein (AccB), biotin carboxylase (AccC) and two subunits each of ACCase subunit alpha (AccA) and ACCase subunit beta (AccD). Requires Zn(2+) as cofactor.

It is found in the cytoplasm. The enzyme catalyses N(6)-carboxybiotinyl-L-lysyl-[protein] + acetyl-CoA = N(6)-biotinyl-L-lysyl-[protein] + malonyl-CoA. It participates in lipid metabolism; malonyl-CoA biosynthesis; malonyl-CoA from acetyl-CoA: step 1/1. With respect to regulation, inhibited by pyrrolidine dione antibiotics moiramide B (CPD1) and CPD2. Functionally, component of the acetyl coenzyme A carboxylase (ACC) complex. Biotin carboxylase (BC) catalyzes the carboxylation of biotin on its carrier protein (BCCP) and then the CO(2) group is transferred by the transcarboxylase to acetyl-CoA to form malonyl-CoA. This is Acetyl-coenzyme A carboxylase carboxyl transferase subunit beta from Bacillus subtilis (strain 168).